Here is a 72-residue protein sequence, read N- to C-terminus: Brevinin-2GHb (72 aa).

The signal sequence occupies residues 1 to 22 (MFTMKKSLLLLFFLGTVSLSLC). Residues 23 to 42 (EQERGADEDDGGEMTEELKR) constitute a propeptide that is removed on maturation. Cysteine 66 and cysteine 72 are joined by a disulfide.

Expressed by the skin glands.

The protein resides in the secreted. Antimicrobial peptide. Active against the Gram-positive bacteria S.aureus FDA209P (MIC=16.5 ug/ml) and B.subtilis ATCC 6633 (MIC&gt;64 ug/ml), and the Gram-negative bacteria E.coli O111 (MIC=8.2 ug/ml) and E.coli ATCC 25922 (MIC=8.2 ug/ml). Not active against the fungus C.albicans. The protein is Brevinin-2GHb of Sylvirana guentheri (Gunther's frog).